An 855-amino-acid polypeptide reads, in one-letter code: Beta-mannosidase B (855 aa).

The N-linked (GlcNAc...) asparagine glycan is linked to Asn98. The active-site Proton donor is the Glu430. 2 N-linked (GlcNAc...) asparagine glycosylation sites follow: Asn693 and Asn730.

It belongs to the glycosyl hydrolase 2 family. Beta-mannosidase B subfamily. Homodimer.

The protein localises to the secreted. The catalysed reaction is Hydrolysis of terminal, non-reducing beta-D-mannose residues in beta-D-mannosides.. It functions in the pathway glycan metabolism; N-glycan degradation. Exoglycosidase that cleaves the single beta-linked mannose residue from the non-reducing end of beta-mannosidic oligosaccharides of various complexity and length. Prefers mannobiose over mannotriose. Is also severely restricted by galactosyl substitutions at the +1 subsite. Has no activity against polymeric mannan. This chain is Beta-mannosidase B (man9), found in Thermothelomyces thermophilus (Myceliophthora thermophila).